Reading from the N-terminus, the 732-residue chain is Polyribonucleotide nucleotidyltransferase (732 aa).

2 residues coordinate Mg(2+): Asp503 and Asp509. A KH domain is found at 570–629 (PRLTSIQIPVDAIGLIIGKGGETIRSITEETGAEINIEDDGTVTIACSSPEGTNAAVETI). The S1 motif domain maps to 639–713 (GNTYLGKVRD…GKNRFALSIK (75 aa)). The interval 710–732 (LSIKAVESEPEKSDENKAGTEGN) is disordered. A compositionally biased stretch (basic and acidic residues) spans 715–732 (VESEPEKSDENKAGTEGN).

This sequence belongs to the polyribonucleotide nucleotidyltransferase family. The cofactor is Mg(2+).

It localises to the cytoplasm. The enzyme catalyses RNA(n+1) + phosphate = RNA(n) + a ribonucleoside 5'-diphosphate. Involved in mRNA degradation. Catalyzes the phosphorolysis of single-stranded polyribonucleotides processively in the 3'- to 5'-direction. The chain is Polyribonucleotide nucleotidyltransferase from Chlorobium phaeobacteroides (strain DSM 266 / SMG 266 / 2430).